The sequence spans 438 residues: MYYHHSHQGWSGDYPRQQSWGQPPPSSYPYPYSSNAQYQPPPGPPPTSHYAPPPGPPPSHYYPPPGSYPSPAPSPYYGQHHTPTPPPQSSSPHQRSYHNHSPSWGQNLPPRPPQESQHFGRGAPSNYRFQYSNCTGRRKALLIGINYIGQPNQLRGCINDVTNMSTFLNEKYGYRREDMVILTDDQKNPMSIPNKANILRAMQWLVKDAQPNDSLFIHFSGHGGRTPDLDGDEEDGYDDVIYPLDYRTAGHIVDDDMHAIMVRPLRPGVRLTAIFDSCHSGTALDLPYVYSTQGILKEPNLAKEAAMDLFSAINSYGKGDLSSVAQTAIGFFKKAANGDTARQRTVMTKTSPADVVMFSGSKDTQTSADTFQDGEARGALSWAFIKTLQQRPNQSYLQLLNSIRNELEGKYTQKPQLSCSHPLGMCNASLVPPRTEID.

Residues 1–125 form a disordered region; the sequence is MYYHHSHQGW…SQHFGRGAPS (125 aa). Over residues 29-38 the composition is skewed to low complexity; the sequence is PYPYSSNAQY. Pro residues predominate over residues 39-74; sequence QPPPGPPPTSHYAPPPGPPPSHYYPPPGSYPSPAPS. Residues His-222 and Cys-278 contribute to the active site.

It belongs to the peptidase C14B family.

Its function is as follows. Involved in cell death (apoptosis). In Aspergillus niger (strain ATCC MYA-4892 / CBS 513.88 / FGSC A1513), this protein is Metacaspase-1B (casB).